Reading from the N-terminus, the 74-residue chain is Sec-independent protein translocase protein TatA (74 aa).

A helical membrane pass occupies residues 1–21; sequence MGTFSIWHWLIVLLVVVVVFG. The segment at 50–74 is disordered; sequence TAPAGQVANQSTADQTIDVQTKPKG. Over residues 56–68 the composition is skewed to polar residues; it reads VANQSTADQTIDV.

Belongs to the TatA/E family. The Tat system comprises two distinct complexes: a TatABC complex, containing multiple copies of TatA, TatB and TatC subunits, and a separate TatA complex, containing only TatA subunits. Substrates initially bind to the TatABC complex, which probably triggers association of the separate TatA complex to form the active translocon.

It localises to the cell inner membrane. Its function is as follows. Part of the twin-arginine translocation (Tat) system that transports large folded proteins containing a characteristic twin-arginine motif in their signal peptide across membranes. TatA could form the protein-conducting channel of the Tat system. This chain is Sec-independent protein translocase protein TatA, found in Verminephrobacter eiseniae (strain EF01-2).